Reading from the N-terminus, the 301-residue chain is MSSLPKNFLQPLPLQPGDRLTVVSPSGSLRELADLQKGVDIWRSWGYEVIFSQGYHNRFGYLAGTDQQRRQDLLHAWLDPQCKGILCSRGGYGSARLLEDWQWPAISQPKWVLGFSDVTGILWSLLKSGIISLHGPVLTTLSDEPDWALERLRGHLQGLPLAPLTGNSWQKGMARGRLVAGNLTVATHFLGTEWQPDFENVILAIEDVTESPYRIDRMVTQWRASGNLSQVAGIALGRFSECEAPAGFPSWTVEEVLGDRLGDLGIPVVADLPFGHGGVNAILPVGSKAELDGDAGTLSFL.

The active-site Nucleophile is serine 116. Residues glutamate 206 and histidine 276 each act as charge relay system in the active site.

The protein belongs to the peptidase S66 family.

The chain is Putative carboxypeptidase slr1534 from Synechocystis sp. (strain ATCC 27184 / PCC 6803 / Kazusa).